The following is a 37-amino-acid chain: Large ribosomal subunit protein bL36c (37 aa).

Belongs to the bacterial ribosomal protein bL36 family.

It is found in the plastid. The protein is Large ribosomal subunit protein bL36c of Helicosporidium sp. subsp. Simulium jonesii (Green alga).